A 174-amino-acid chain; its full sequence is Type II secretion system protein M (174 aa).

At Met1–Arg32 the chain is on the cytoplasmic side. The chain crosses the membrane as a helical span at residues Leu33 to Trp52. Over Arg53–Glu174 the chain is Periplasmic.

This sequence belongs to the GSP M family. In terms of assembly, type II secretion system is composed of four main components: the outer membrane complex, the inner membrane complex, the cytoplasmic secretion ATPase and the periplasm-spanning pseudopilus. Forms homodimers. Interacts with XcpY/GspL. Interacts with XcpR/GspE and XcpS/GspF.

It localises to the cell inner membrane. In terms of biological role, inner membrane component of the type II secretion system required for the energy-dependent secretion of extracellular factors such as proteases and toxins from the periplasm. Plays a role in the complex assembly and recruits XcpY resulting in a stable complex in the inner membrane. Provides thus a link between the energy-providing XcpR protein in the cytoplasm and the rest of the T2SS machinery. The protein is Type II secretion system protein M (xcpZ) of Pseudomonas aeruginosa (strain ATCC 15692 / DSM 22644 / CIP 104116 / JCM 14847 / LMG 12228 / 1C / PRS 101 / PAO1).